Consider the following 252-residue polypeptide: MALLQLLLFAMLAACGFSEEQTEGITIAYKVLEVYPQSRRVLITCDAPEASQPITYSLLASRGILVAKKVVHDSVPASFNINITIKSSPDLLTYSCQATSNSGTYGPSSRLQMYQELWAKPVSQLQADFVLRHGDSGPTVELSCLASSGSPPITYRLVGNGGRVLAQQRPLHGKPANFSLPLSQTTGWFQCEAENDVGVDSSARIPLPRAEARAKLVTTLAGELPLTPTCILAGSLVSIAVIASRMLSSTGL.

A signal peptide spans M1 to S18. 2 N-linked (GlcNAc...) asparagine glycosylation sites follow: N82 and N177.

In terms of tissue distribution, expressed in bone marrow, spleen and lymph node.

The protein resides in the secreted. Probable B cell-associated cytokine that plays a role in the regulation of humoral immune responses. Involved in lymphocyte B cell development and immunoglobulin/IgA production. The chain is Protein IL-40 from Mus musculus (Mouse).